Reading from the N-terminus, the 97-residue chain is Protein S100-A10 (97 aa).

Residues 47-82 (RDPMALDKIMKDLDQCRDGKVGFQSFFSLVAGLTIA) enclose the EF-hand domain. An ancestral calcium site region spans residues 60–71 (DQCRDGKVGFQS).

This sequence belongs to the S-100 family. In terms of assembly, heterotetramer containing 2 light chains of S100A10/p11 and 2 heavy chains of ANXA2/p36.

Because S100A10 induces the dimerization of ANXA2/p36, it may function as a regulator of protein phosphorylation in that the ANXA2 monomer is the preferred target (in vitro) of tyrosine-specific kinase. The protein is Protein S100-A10 (S100A10) of Gallus gallus (Chicken).